The following is a 459-amino-acid chain: Putrescine aminotransferase (459 aa).

Pyridoxal 5'-phosphate is bound by residues 150 to 151 and Gln-274; that span reads GT. Residue Lys-300 is modified to N6-(pyridoxal phosphate)lysine. A pyridoxal 5'-phosphate-binding site is contributed by Thr-332.

The protein belongs to the class-III pyridoxal-phosphate-dependent aminotransferase family. Putrescine aminotransferase subfamily. Pyridoxal 5'-phosphate serves as cofactor.

The enzyme catalyses an alkane-alpha,omega-diamine + 2-oxoglutarate = an omega-aminoaldehyde + L-glutamate. It catalyses the reaction putrescine + 2-oxoglutarate = 1-pyrroline + L-glutamate + H2O. It carries out the reaction cadaverine + 2-oxoglutarate = 5-aminopentanal + L-glutamate. It functions in the pathway amine and polyamine degradation; putrescine degradation; 4-aminobutanal from putrescine (transaminase route): step 1/1. In terms of biological role, catalyzes the aminotransferase reaction from putrescine to 2-oxoglutarate, leading to glutamate and 4-aminobutanal, which spontaneously cyclizes to form 1-pyrroline. This is the first step in one of two pathways for putrescine degradation, where putrescine is converted into 4-aminobutanoate (gamma-aminobutyrate or GABA) via 4-aminobutanal. Also functions as a cadaverine transaminase in a a L-lysine degradation pathway to succinate that proceeds via cadaverine, glutarate and L-2-hydroxyglutarate. The chain is Putrescine aminotransferase from Salmonella paratyphi A (strain ATCC 9150 / SARB42).